The chain runs to 358 residues: Aminomethyltransferase (358 aa).

The protein belongs to the GcvT family. In terms of assembly, the glycine cleavage system is composed of four proteins: P, T, L and H.

The catalysed reaction is N(6)-[(R)-S(8)-aminomethyldihydrolipoyl]-L-lysyl-[protein] + (6S)-5,6,7,8-tetrahydrofolate = N(6)-[(R)-dihydrolipoyl]-L-lysyl-[protein] + (6R)-5,10-methylene-5,6,7,8-tetrahydrofolate + NH4(+). Its function is as follows. The glycine cleavage system catalyzes the degradation of glycine. The polypeptide is Aminomethyltransferase (Francisella philomiragia subsp. philomiragia (strain ATCC 25017 / CCUG 19701 / FSC 153 / O#319-036)).